The sequence spans 65 residues: Small ribosomal subunit protein eS27 (65 aa).

The Zn(2+) site is built by Cys-20, Cys-23, Cys-39, and Cys-42. Residues 20–42 (CIDCGNEQIVFSHPATKVRCLVC) form a C4-type zinc finger.

This sequence belongs to the eukaryotic ribosomal protein eS27 family. Part of the 30S ribosomal subunit. Zn(2+) is required as a cofactor.

The sequence is that of Small ribosomal subunit protein eS27 from Thermococcus gammatolerans (strain DSM 15229 / JCM 11827 / EJ3).